The chain runs to 511 residues: Peptide transporter YePEPT (511 aa).

Topologically, residues 1–19 are cytoplasmic; that stretch reads MQTSTNTPGGRTFFGHPYP. Residues 20–45 form a helical membrane-spanning segment; sequence LSGLFLSEMWERFSFYGIRPLLILFM. The Periplasmic portion of the chain corresponds to 46-59; sequence AATVFDGGMGLPRE. Residues 60-84 traverse the membrane as a helical segment; it reads QASAIVGIFAGSMYLAALPGGLLAD. At 85 to 88 the chain is on the cytoplasmic side; it reads NWLG. A helical transmembrane segment spans residues 89-109; the sequence is QQRAVWYGSILIALGHLSIAL. The Periplasmic segment spans residues 110 to 115; sequence SAFFGN. Residues 116 to 138 traverse the membrane as a helical segment; the sequence is DLFFIGLVFIVLGTGLFKTCISV. Topologically, residues 139–149 are cytoplasmic; it reads MVGTLYKPGDA. The chain crosses the membrane as a helical span at residues 150 to 175; the sequence is RRDGGFSLFYMGINMGSFIAPLLSGW. Topologically, residues 176–181 are periplasmic; sequence LLRTHG. A helical membrane pass occupies residues 182-208; that stretch reads WHWGFGIGGIGMLVALLIFRGFAIPAM. At 209–232 the chain is on the cytoplasmic side; it reads KRYDAEVGLDSSWNKPTNQRQGVG. Residues 233–253 form a helical membrane-spanning segment; it reads RWVTAIMAVVVVIIALISQGV. Residues 254 to 256 are Periplasmic-facing; that stretch reads IPI. A helical membrane pass occupies residues 257-279; that stretch reads NPVMIASLLVYVIAASVTLYFIY. Residues 280 to 294 lie on the Cytoplasmic side of the membrane; the sequence is LFAFAKMSRKDRARL. A helical membrane pass occupies residues 295 to 321; it reads LVCFILLVSAAFFWSAFEQKPTSFNLF. At 322–335 the chain is on the periplasmic side; the sequence is ANDYTDRMVMGFEI. A helical transmembrane segment spans residues 336–357; the sequence is PTVWFQSINALFIILLAPVFSW. At 358-369 the chain is on the cytoplasmic side; it reads AWPALAKKKIQP. The helical transmembrane segment at 370-396 threads the bilayer; it reads SSITKFVIGILCAAAGFAVMMYAAQHV. Topologically, residues 397-405 are periplasmic; sequence LSSGGAGVS. Residues 406–426 traverse the membrane as a helical segment; that stretch reads PLWLVMSILLLTLGELCLSPI. Topologically, residues 427–441 are cytoplasmic; that stretch reads GLATMTLLAPDRMRG. A helical membrane pass occupies residues 442 to 462; it reads QVMGLWFCASSLGNLAAGLIG. Topologically, residues 463 to 471 are periplasmic; that stretch reads GHVKADQLD. Residues 472–496 form a helical membrane-spanning segment; the sequence is MLPTLFARCSIALVICAAVLILLIV. Residues 497-511 lie on the Cytoplasmic side of the membrane; the sequence is PIRRLMNNTQGQQTA.

Belongs to the major facilitator superfamily. Proton-dependent oligopeptide transporter (POT/PTR) (TC 2.A.17) family.

The protein resides in the cell inner membrane. With respect to regulation, transport is inhibited by the proton ionophore carbonyl cyanide m-chlorophenylhydrazone (CCCP). Functionally, mediates the proton-dependent uptake of dipeptides. Shows higher affinity for dipeptides with a negatively charged amino acid residue at the N-terminal position, such as Asp-Ala and Glu-Ala. Also displays specificity for Ala-Ala, Ala-Tyr and Tyr-Ala. The sequence is that of Peptide transporter YePEPT from Yersinia enterocolitica subsp. palearctica serotype O:3 (strain YE-P4).